A 756-amino-acid chain; its full sequence is 5-methyltetrahydropteroyltriglutamate--homocysteine methyltransferase (756 aa).

5-methyltetrahydropteroyltri-L-glutamate contacts are provided by residues arginine 16 to lysine 19 and lysine 112. L-homocysteine is bound by residues isoleucine 432–serine 434 and glutamate 485. L-methionine is bound by residues isoleucine 432–serine 434 and glutamate 485. 5-methyltetrahydropteroyltri-L-glutamate is bound by residues arginine 516–cysteine 517 and tryptophan 562. An L-homocysteine-binding site is contributed by aspartate 600. Aspartate 600 lines the L-methionine pocket. Glutamate 606 is a binding site for 5-methyltetrahydropteroyltri-L-glutamate. The Zn(2+) site is built by histidine 642, cysteine 644, and glutamate 666. Histidine 695 serves as the catalytic Proton donor. A Zn(2+)-binding site is contributed by cysteine 727.

The protein belongs to the vitamin-B12 independent methionine synthase family. Zn(2+) is required as a cofactor.

The catalysed reaction is 5-methyltetrahydropteroyltri-L-glutamate + L-homocysteine = tetrahydropteroyltri-L-glutamate + L-methionine. It functions in the pathway amino-acid biosynthesis; L-methionine biosynthesis via de novo pathway; L-methionine from L-homocysteine (MetE route): step 1/1. Catalyzes the transfer of a methyl group from 5-methyltetrahydrofolate to homocysteine resulting in methionine formation. The protein is 5-methyltetrahydropteroyltriglutamate--homocysteine methyltransferase of Haemophilus influenzae (strain ATCC 51907 / DSM 11121 / KW20 / Rd).